The primary structure comprises 545 residues: DNA mismatch repair protein MutL (545 aa).

Residues 516 to 545 are disordered; it reads GRRSGARGGGEARPRPQEESFPEAPLPREP.

It belongs to the DNA mismatch repair MutL/HexB family.

Functionally, this protein is involved in the repair of mismatches in DNA. It is required for dam-dependent methyl-directed DNA mismatch repair. May act as a 'molecular matchmaker', a protein that promotes the formation of a stable complex between two or more DNA-binding proteins in an ATP-dependent manner without itself being part of a final effector complex. The polypeptide is DNA mismatch repair protein MutL (Thermus thermophilus (strain ATCC BAA-163 / DSM 7039 / HB27)).